The sequence spans 107 residues: uncharacterized protein (107 aa).

This is an uncharacterized protein from Autographa californica nuclear polyhedrosis virus (AcMNPV).